Here is a 327-residue protein sequence, read N- to C-terminus: MAAPGSCALWSYCGRGWSRAMRGCQLLGLRSSWPGDLLSARLLSQEKRAAETHFGFETVSEEEKGGKVYQVFESVAKKYDVMNDMMSLGIHRVWKDLLLWKMHPLPGTQLLDVAGGTGDIAFRFLNYVQSQHQRKQKRQLRAQQNLSWEEIAKEYQNEEDSLGGSRVVVCDINKEMLKVGKQKALAQGYRAGLAWVLGDAEELPFDDDKFDIYTIAFGIRNVTHIDQALQEAHRVLKPGGRFLCLEFSQVNNPLISRLYDLYSFQVIPVLGEVIAGDWKSYQYLVESIRRFPSQEEFKDMIEDAGFHKVTYESLTSGIVAIHSGFKL.

The N-terminal 42 residues, 1–42 (MAAPGSCALWSYCGRGWSRAMRGCQLLGLRSSWPGDLLSARL), are a transit peptide targeting the mitochondrion. Residues threonine 117, aspartate 171, and 199–200 (DA) contribute to the S-adenosyl-L-methionine site.

The protein belongs to the class I-like SAM-binding methyltransferase superfamily. MenG/UbiE family. Component of a multi-subunit COQ enzyme complex, composed of at least COQ3, COQ4, COQ5, COQ6, COQ7 and COQ9. Interacts with PYURF; the interaction is direct, stabilizes COQ5 protein and associates PYURF with COQ enzyme complex. As to expression, widely expressed, with highest levels in liver, lung, placenta and skeletal muscle.

The protein localises to the mitochondrion inner membrane. It catalyses the reaction 2-methoxy-6-(all-trans-decaprenyl)benzene-1,4-diol + S-adenosyl-L-methionine = 5-methoxy-2-methyl-3-(all-trans-decaprenyl)benzene-1,4-diol + S-adenosyl-L-homocysteine + H(+). The protein operates within cofactor biosynthesis; ubiquinone biosynthesis. Functionally, methyltransferase required for the conversion of 2-decaprenyl-6-methoxy-1,4-benzoquinol (DDMQH2) to 2-decaprenyl-3-methyl-6-methoxy-1,4-benzoquinol (DMQH2). This chain is 2-methoxy-6-polyprenyl-1,4-benzoquinol methylase, mitochondrial, found in Homo sapiens (Human).